A 72-amino-acid polypeptide reads, in one-letter code: Large ribosomal subunit protein bL28 (72 aa).

Belongs to the bacterial ribosomal protein bL28 family.

The protein is Large ribosomal subunit protein bL28 of Chlorobium phaeobacteroides (strain DSM 266 / SMG 266 / 2430).